The sequence spans 552 residues: Hyaluronan synthase 2 (552 aa).

Residues 1–11 (MHCERFLCILR) are Cytoplasmic-facing. A helical membrane pass occupies residues 12–32 (IIGTTLFGVSLLLGITAAYIV). At 33–45 (GYQFIQTDNYYFS) the chain is on the extracellular side. Residues 46–66 (FGLYGAFLASHLIIQSLFAFL) traverse the membrane as a helical segment. Topologically, residues 67 to 374 (EHRKMKKSLE…NAMWFHKHHL (308 aa)) are cytoplasmic. Thr110 is modified (phosphothreonine). A Glycyl lysine isopeptide (Lys-Gly) (interchain with G-Cter in ubiquitin) cross-link involves residue Lys190. Ser221 carries an O-linked (GlcNAc) serine glycan. Position 328 is a phosphothreonine (Thr328). A helical transmembrane segment spans residues 375-395 (WMTYEAVITGFFPFFLIATVI). The Extracellular portion of the chain corresponds to 396–402 (QLFYRGK). A helical membrane pass occupies residues 403–423 (IWNILLFLLTVQLVGLIKSSF). The Cytoplasmic portion of the chain corresponds to 424–429 (ASCLRG). Residues 430 to 450 (NIVMVFMSLYSVLYMSSLLPA) traverse the membrane as a helical segment. Residues 451 to 475 (KMFAIATINKAGWGTSGRKTIVVNF) are Extracellular-facing. A helical membrane pass occupies residues 476–496 (IGLIPVSVWFTILLGGVIFTI). Residues 497 to 510 (YKESKKPFSESKQT) lie on the Cytoplasmic side of the membrane. Residues 511–531 (VLIVGTLLYACYWVMLLTLYV) traverse the membrane as a helical segment. Residues 532-552 (VLINKCGRRKKGQQYDMVLDV) are Extracellular-facing.

Belongs to the NodC/HAS family. Homodimer; dimerization promotes enzymatic activity. Forms heterodimer with HAS3. Forms heterodimer with HAS1. Mg(2+) is required as a cofactor. In terms of processing, phosphorylation at Thr-328 is essential for hyaluronan synthase activity. Post-translationally, O-GlcNAcylation at Ser-221 increases the stability of HAS2 and plasma membrane localization. Ubiquitination at Lys-190; this ubiquitination is essential for hyaluronan synthase activity and homo- or hetero-oligomerization. Can also be poly-ubiquitinated. Deubiquitinated by USP17L22/USP17 and USP4. USP17L22/USP17 efficiently removes 'Lys-63'- and 'Lys-48'-linked polyubiquitin chains, whereas USP4 preferentially removes monoubiquitination and, partially, both 'Lys-63'- and 'Lys-48'-linked polyubiquitin chain. Overexpressed in skin fibroblasts.

The protein resides in the cell membrane. It localises to the endoplasmic reticulum membrane. It is found in the vesicle. The protein localises to the golgi apparatus membrane. Its subcellular location is the lysosome. The enzyme catalyses [hyaluronan](n) + UDP-N-acetyl-alpha-D-glucosamine = N-acetyl-beta-D-glucosaminyl-(1-&gt;4)-[hyaluronan](n) + UDP + H(+). It catalyses the reaction N-acetyl-beta-D-glucosaminyl-(1-&gt;4)-[hyaluronan](n) + UDP-alpha-D-glucuronate = [hyaluronan](n+1) + UDP + H(+). Its pathway is glycan biosynthesis; hyaluronan biosynthesis. Functionally, catalyzes the addition of GlcNAc or GlcUA monosaccharides to the nascent hyaluronan polymer. Therefore, it is essential to hyaluronan synthesis a major component of most extracellular matrices that has a structural role in tissues architectures and regulates cell adhesion, migration and differentiation. This is one of three isoenzymes responsible for cellular hyaluronan synthesis and it is particularly responsible for the synthesis of high molecular mass hyaluronan. In Heterocephalus glaber (Naked mole rat), this protein is Hyaluronan synthase 2 (Has2).